A 97-amino-acid polypeptide reads, in one-letter code: YcgL domain-containing protein PA1295 (97 aa).

Positions 3-87 (RICSVYKSPR…GEEEYIEHLP (85 aa)) constitute a YcgL domain.

The chain is YcgL domain-containing protein PA1295 from Pseudomonas aeruginosa (strain ATCC 15692 / DSM 22644 / CIP 104116 / JCM 14847 / LMG 12228 / 1C / PRS 101 / PAO1).